Consider the following 213-residue polypeptide: Large ribosomal subunit protein eL14 (213 aa).

An N6-acetyllysine modification is found at lysine 79. Lysine 85 carries the N6-acetyllysine; alternate modification. N6-succinyllysine; alternate is present on lysine 85. A Glycyl lysine isopeptide (Lys-Gly) (interchain with G-Cter in SUMO2) cross-link involves residue lysine 124. Serine 139 is subject to Phosphoserine. The segment at 166–213 (TAGKKAPAQKAPAQKAAGQKAAPPPKAQKVQKPPAQKAPAPKASGEKA) is disordered. One copy of the 1-1; approximate repeat lies at 169-173 (KKAPA). The segment at 169–188 (KKAPAQKAPAQKAAGQKAAP) is 4 X 5 AA tandem repeats of Q-K-A-[APS]-X. A run of 5 repeats spans residues 174–178 (QKAPA), 179–183 (QKAAG), 184–188 (QKAAP), 191–193 (KAQ), and 194–196 (KVQ). Positions 191 to 196 (KAQKVQ) are 2 X 3 AA tandem repeats of K-G-Q. Lysine 202 is subject to N6-succinyllysine.

Belongs to the eukaryotic ribosomal protein eL14 family. In terms of assembly, component of the large ribosomal subunit.

The protein resides in the cytoplasm. Functionally, component of the large ribosomal subunit. The ribosome is a large ribonucleoprotein complex responsible for the synthesis of proteins in the cell. This Sus scrofa (Pig) protein is Large ribosomal subunit protein eL14 (RPL14).